Reading from the N-terminus, the 559-residue chain is Chromatin assembly factor 1 subunit B (559 aa).

7 WD repeats span residues 11–54, 64–103, 127–166, 169–208, 228–279, 299–340, and 344–385; these read HNKE…DGKA, RHTK…EPEQ, GHLE…KISI, EHKS…VAFN, FHDD…RPIA, ELRP…PFGY, and IHYH…IPLK. The tract at residues 386-559 is disordered; sequence EKPVLNMRTP…NKGGTESLDP (174 aa). Thr-394 bears the Phosphothreonine mark. Ser-409 bears the Phosphoserine mark. A Phosphothreonine modification is found at Thr-419. At Ser-429 the chain carries Phosphoserine. Residues 430–444 show a composition bias toward low complexity; that stretch reads PGTTPPQARQAPAPT. A Phosphothreonine modification is found at Thr-433. Ser-458 carries the post-translational modification Phosphoserine. Positions 469 to 495 are enriched in polar residues; sequence LQPSSQNTKAHPSRRVTLNTLQAWSKT. N6-acetyllysine is present on Lys-494. Thr-495, Thr-509, Thr-521, and Thr-531 each carry phosphothreonine. A compositionally biased stretch (low complexity) spans 509 to 526; sequence TPPSSVPTSVISTPSTEE. Position 538 is a phosphoserine (Ser-538). The span at 541 to 552 shows a compositional bias: basic and acidic residues; it reads ELKRPRLDENKG.

It belongs to the WD repeat HIR1 family. Subunit of the CAF-1 complex that contains RBBP4, CHAF1B and CHAF1A. CHAF1A binds directly to CHAF1B. Only minor amounts of RBBP4 are complexed with CHAF1A and CHAF1B in G1 phase. In G2 and S phase also monomeric CHAF1B is detected. Interacts with histones H3.1, H3.2 and H3.1t. Differentially phosphorylated during cell cycle. During mitosis the p60 subunit of inactive CAF-1 is hyperphosphorylated and displaced into the cytosol. Progressivly dephosphorylated from G1 to S and G2 phase. Phosphorylated p60 is recruited to chromatin undergoing DNA repair after UV irradiation in G1, S or G2 phases.

Its subcellular location is the nucleus. It is found in the cytoplasm. In terms of biological role, acts as a component of the histone chaperone complex chromatin assembly factor 1 (CAF-1), which assembles histone octamers onto DNA during replication and repair. CAF-1 performs the first step of the nucleosome assembly process, bringing newly synthesized histones H3 and H4 to replicating DNA; histones H2A/H2B can bind to this chromatin precursor subsequent to DNA replication to complete the histone octamer. In Homo sapiens (Human), this protein is Chromatin assembly factor 1 subunit B.